Here is a 375-residue protein sequence, read N- to C-terminus: Succinyl-diaminopimelate desuccinylase (375 aa).

His-66 lines the Zn(2+) pocket. Asp-68 is a catalytic residue. Residue Asp-99 coordinates Zn(2+). Glu-133 functions as the Proton acceptor in the catalytic mechanism. Residues Glu-134, Glu-162, and His-348 each coordinate Zn(2+).

The protein belongs to the peptidase M20A family. DapE subfamily. In terms of assembly, homodimer. Zn(2+) serves as cofactor. The cofactor is Co(2+).

The catalysed reaction is N-succinyl-(2S,6S)-2,6-diaminopimelate + H2O = (2S,6S)-2,6-diaminopimelate + succinate. It functions in the pathway amino-acid biosynthesis; L-lysine biosynthesis via DAP pathway; LL-2,6-diaminopimelate from (S)-tetrahydrodipicolinate (succinylase route): step 3/3. Catalyzes the hydrolysis of N-succinyl-L,L-diaminopimelic acid (SDAP), forming succinate and LL-2,6-diaminopimelate (DAP), an intermediate involved in the bacterial biosynthesis of lysine and meso-diaminopimelic acid, an essential component of bacterial cell walls. In Janthinobacterium sp. (strain Marseille) (Minibacterium massiliensis), this protein is Succinyl-diaminopimelate desuccinylase.